Here is a 118-residue protein sequence, read N- to C-terminus: Thioredoxin AMT13 (118 aa).

The 110-residue stretch at M1–G110 folds into the Thioredoxin domain. A disulfide bond links C36 and C39.

The protein belongs to the thioredoxin family.

It functions in the pathway mycotoxin biosynthesis. In terms of biological role, thioredoxin; part of the gene clusters that mediate the biosynthesis of AM-toxins, host-selective toxins (HSTs) causing Alternaria blotch on apple, a worldwide distributed disease. AM-toxins are cyclic depsipeptides containing the 3 residues 2-hydroxy-isovaleric acid (2-HIV), dehydroalanine, L-alanine which are common for all 3 AM-toxins I to III. The fourth precursor is L-alpha-amino-methoxyphenyl-valeric acid (L-Amv) for AM-toxin I, L-alpha-amino-phenyl-valeric acid (L-Apv) for AM-toxin II, and L-alpha-amino-hydroxyphenyl-valeric acid (L-Ahv) for AM-toxin III. AM-toxins have two target sites for affecting susceptible apple cells; they cause invagination of the plasma membrane and electrolyte loss and chloroplast disorganization. The non-ribosomal peptide synthetase AMT1 contains 4 catalytic modules and is responsible for activation of each residue in AM-toxin. The aldo-keto reductase AMT2 catalyzes the conversion of 2-keto-isovaleric acid (2-KIV) to 2-hydroxy-isovaleric acid (2-HIV), one of the precursor residues incorporated by AMT1 during AM-toxin biosynthesis, by reduction of its ketone to an alcohol. The cytochrome P450 monooxygenase AMT3 and the thioesterase AMT4 are also important for AM-toxin production, but their exact function within the AM-toxin biosynthesis are not known yet. Up to 21 proteins (including AMT1 to AMT4) are predicted to be involved in AM-toxin biosynthesis since their expression ishighly up-regulated in AM-toxin-producing cultures. This chain is Thioredoxin AMT13, found in Alternaria alternata (Alternaria rot fungus).